A 364-amino-acid chain; its full sequence is Tripartite motif-containing protein 54 (364 aa).

Residues 26–82 form an RING-type zinc finger; sequence CPICLEMFSKPVVILPCQHNLCRKCANDVFQASNPLWQSRGSTTVSSGGRFRCPSCR. The B box-type zinc-finger motif lies at 121 to 163; sequence EQHLMCEEHEDEKINIYCLSCEVPTCSLCKVFGAHKDCEVAPL. Residues cysteine 126, histidine 129, cysteine 149, and histidine 155 each coordinate Zn(2+). The mediates microtubule-binding and homooligomerization stretch occupies residues 168–211; it reads KRQKSELSDGIAMLVAGNDRVQAVITQMEEVCQTIEDNSRRQKQ. Residues 194–252 adopt a coiled-coil conformation; the sequence is QMEEVCQTIEDNSRRQKQLLNQKFETLCAVLEERKGELLQALARVQEEKLQRVRSLIRQ. A COS domain is found at 271-329; that stretch reads MEEPQMALYLQQAKELINKVGAMSKVELAGRPEPGYESMEQFSVIVEHVAEMLRTIDFQ. The interval 328–364 is disordered; that stretch reads FQPGASGDEEDDEVTLDGEEGNTGLEEERLDGPEGLH. Over residues 334 to 347 the composition is skewed to acidic residues; sequence GDEEDDEVTLDGEE. The span at 353–364 shows a compositional bias: basic and acidic residues; that stretch reads EEERLDGPEGLH.

As to quaternary structure, homooligomer and heterooligomer. Interacts with TRIM63 and probably with TRIM55. Interacts with tubulin.

Its subcellular location is the cytoplasm. The protein resides in the cytoskeleton. It localises to the myofibril. It is found in the sarcomere. The protein localises to the z line. Its function is as follows. May bind and stabilize microtubules during myotubes formation. This chain is Tripartite motif-containing protein 54 (Trim54), found in Rattus norvegicus (Rat).